Here is a 356-residue protein sequence, read N- to C-terminus: Arginine kinase (356 aa).

Alanine 2 carries the post-translational modification N-acetylalanine. In terms of domain architecture, Phosphagen kinase N-terminal spans 9–91 (KLEAGFKKLE…FDPIIEDYHV (83 aa)). Residue 64–68 (GVGIY) coordinates L-arginine. One can recognise a Phosphagen kinase C-terminal domain in the interval 119-356 (YVISTRVRCG…LELIKMEKEM (238 aa)). Residues 122 to 126 (STRVR) and histidine 185 each bind ATP. Glutamate 225 contacts L-arginine. ATP is bound at residue arginine 229. Cysteine 271 contacts L-arginine. Residues 280–284 (RASVH) and 309–314 (RGTRGE) contribute to the ATP site. An L-arginine-binding site is contributed by glutamate 314.

It belongs to the ATP:guanido phosphotransferase family.

It catalyses the reaction L-arginine + ATP = N(omega)-phospho-L-arginine + ADP + H(+). This Penaeus monodon (Giant tiger prawn) protein is Arginine kinase.